We begin with the raw amino-acid sequence, 160 residues long: Baculoviral IAP repeat-containing protein 5.1 (160 aa).

A BIR repeat occupies Arg-27–Ser-97. Position 43 is a phosphothreonine; by CDK1 (Thr-43). 4 residues coordinate Zn(2+): Cys-66, Cys-69, His-86, and Cys-93.

The protein belongs to the IAP family. As to quaternary structure, component of the CPC at least composed of survivin/birc5, incenp, cdca8/borealin and/or cdca9/dasra-A, and aurkb/aurora-B. Interacts directly with incenp (via N-terminus), and may weakly interact with aurkb (via N-terminus) to stabilize the complex. Interacts with GTP-bound ran in both the S and M phases of the cell cycle. Also found in a complex with ubiquitin-mediated signaling proteins including at least usp9x/xFAM, nploc4/npl4 and ufd1. Post-translationally, ubiquitination is required for centrosome-targeting.

Its subcellular location is the cytoplasm. The protein resides in the nucleus. It is found in the chromosome. It localises to the centromere. The protein localises to the cytoskeleton. Its subcellular location is the spindle. In terms of biological role, component of the chromosomal passenger complex (CPC), a complex that acts as a key regulator of mitosis. The CPC complex has essential functions at the centromere in ensuring correct chromosome alignment and segregation and is required for chromatin-induced microtubule stabilization and spindle assembly. Stimulates the mitotic kinase activity of aurkb/aurora-B in the CPC. Does not appear to exhibit anti-apoptotic activity. The sequence is that of Baculoviral IAP repeat-containing protein 5.1 (birc5.1) from Xenopus tropicalis (Western clawed frog).